The following is a 160-amino-acid chain: Cell cycle regulator of non-homologous end joining (160 aa).

M1 is modified (N-acetylmethionine). Positions 1-21 match the KBM motif; sequence METLKSDNKKRVLPSWMTAPG. The tract at residues 78 to 152 is disordered; the sequence is KPWEQPSLVA…EGKEEEDELK (75 aa). Positions 99-109 are enriched in low complexity; it reads ESPHTSSPGSS. Residues 150 to 160 carry the XLM motif; it reads ELKYVREIFFS.

Interacts (via KBM motif) with XRCC5/Ku80 and XRCC6/Ku70 heterodimer. Interacts (via XLF motif) with TRIM28/KAP1, ATM, MRE11, NBN and RAD50. Interacts with splicing factor SF3B1. Interacts with ERCC6L2; this interaction is DNA independent.

It is found in the cytoplasm. It localises to the nucleus. The protein resides in the chromosome. In terms of biological role, cell-cycle-specific regulator of classical non-homologous end joining (NHEJ) of DNA double-strand break (DSB) repair, which can act both as an activator or inhibitor of NHEJ, depending on the cell cycle phase. Acts as a regulator of DNA repair pathway choice by specifically inhibiting classical NHEJ during the S and G2 phases, thereby promoting error-free repair by homologous recombination during cell cycle phases when sister chromatids are present. Preferentially protects single-stranded overhangs at break sites by inhibiting classical NHEJ, thereby creating a local environment that favors homologous recombination. Acts via interaction with XRCC5/Ku80 and XRCC6/Ku70. In contrast, acts as an activator of NHEJ during G1 phase of the cell cycle: promotes classical NHEJ in G1 phase cells via multivalent interactions that increase the affinity of DNA damage response proteins for DSB-associated chromatin. Also involved in immunoglobulin V(D)J recombination. May also act as an indirect regulator of proteasome. This chain is Cell cycle regulator of non-homologous end joining, found in Rattus norvegicus (Rat).